Reading from the N-terminus, the 81-residue chain is Photosystem I iron-sulfur center (81 aa).

2 consecutive 4Fe-4S ferredoxin-type domains span residues Ala2 to Trp31 and Ile39 to Tyr68. 8 residues coordinate [4Fe-4S] cluster: Cys11, Cys14, Cys17, Cys21, Cys48, Cys51, Cys54, and Cys58.

In terms of assembly, the eukaryotic PSI reaction center is composed of at least 11 subunits. [4Fe-4S] cluster is required as a cofactor.

The protein resides in the plastid. It localises to the chloroplast thylakoid membrane. It carries out the reaction reduced [plastocyanin] + hnu + oxidized [2Fe-2S]-[ferredoxin] = oxidized [plastocyanin] + reduced [2Fe-2S]-[ferredoxin]. Apoprotein for the two 4Fe-4S centers FA and FB of photosystem I (PSI); essential for photochemical activity. FB is the terminal electron acceptor of PSI, donating electrons to ferredoxin. The C-terminus interacts with PsaA/B/D and helps assemble the protein into the PSI complex. Required for binding of PsaD and PsaE to PSI. PSI is a plastocyanin/cytochrome c6-ferredoxin oxidoreductase, converting photonic excitation into a charge separation, which transfers an electron from the donor P700 chlorophyll pair to the spectroscopically characterized acceptors A0, A1, FX, FA and FB in turn. The sequence is that of Photosystem I iron-sulfur center from Gracilaria tenuistipitata var. liui (Red alga).